Here is a 454-residue protein sequence, read N- to C-terminus: Mitochondrial dynamics protein MID49 (454 aa).

Residues 1-22 (MAEFSQKRGKRRGDEGLGSMVD) lie on the Mitochondrial intermembrane side of the membrane. A helical membrane pass occupies residues 23–43 (FLLANARLVLGVGGAAVLGIA). The Cytoplasmic portion of the chain corresponds to 44–454 (TLAVKRFIDR…SGLQEPEGLL (411 aa)). Residues 76 to 119 (ATPHLQPRPPPAALSQPVLPLAPSSSAPEGPAKSDPEVTPQLSS) form a disordered region. The segment covering 88-108 (ALSQPVLPLAPSSSAPEGPAK) has biased composition (low complexity).

The protein belongs to the MID49/MID51 family. In terms of assembly, interacts with DNM1L.

It localises to the mitochondrion outer membrane. In terms of biological role, mitochondrial outer membrane protein which regulates mitochondrial organization. It is required for mitochondrial fission and promotes the recruitment and association of the fission mediator dynamin-related protein 1 (DNM1L) to the mitochondrial surface independently of the mitochondrial fission FIS1 and MFF proteins. Regulates DNM1L GTPase activity. In Pongo abelii (Sumatran orangutan), this protein is Mitochondrial dynamics protein MID49 (MIEF2).